We begin with the raw amino-acid sequence, 335 residues long: MAARWRFWCVSVTMVVALLIVCDVPSASAQRKKEMVLSEKVSQLMEWTNKRPVIRMNGDKFRRLVKAPPRNYSVIVMFTALQLHRQCVVCKQADEEFQILANSWRYSSAFTNRIFFAMVDFDEGSDVFQMLNMNSAPTFINFPAKGKPKRGDTYELQVRGFSAEQIARWIADRTDVNIRVIRPPNYAGPLMLGLLLAVIGGLVYLRRSNMEFLFNKTGWAFAALCFVLAMTSGQMWNHIRGPPYAHKNPHTGHVNYIHGSSQAQFVAETHIVLLFNGGVTLGMVLLCEAATSDMDIGKRKIMCVAGIGLVVLFFSWMLSIFRSKYHGYPYSFLMS.

The first 29 residues, 1-29 (MAARWRFWCVSVTMVVALLIVCDVPSASA), serve as a signal peptide directing secretion. The Extracellular portion of the chain corresponds to 30–184 (QRKKEMVLSE…DVNIRVIRPP (155 aa)). Residues 47–175 (WTNKRPVIRM…IARWIADRTD (129 aa)) form the Thioredoxin domain. Asparagine 71 is a glycosylation site (N-linked (GlcNAc...) asparagine). The cysteines at positions 87 and 90 are disulfide-linked. A helical transmembrane segment spans residues 185–205 (NYAGPLMLGLLLAVIGGLVYL). The Cytoplasmic portion of the chain corresponds to 206–209 (RRSN). Residues 210–230 (MEFLFNKTGWAFAALCFVLAM) traverse the membrane as a helical segment. Topologically, residues 231-270 (TSGQMWNHIRGPPYAHKNPHTGHVNYIHGSSQAQFVAETH) are extracellular. Residues 271–291 (IVLLFNGGVTLGMVLLCEAAT) form a helical membrane-spanning segment. Over 292–300 (SDMDIGKRK) the chain is Cytoplasmic. Residues 301 to 321 (IMCVAGIGLVVLFFSWMLSIF) traverse the membrane as a helical segment. Topologically, residues 322 to 335 (RSKYHGYPYSFLMS) are extracellular.

Belongs to the OST3/OST6 family. In terms of assembly, accessory component of the STT3B-containing form of the oligosaccharyltransferase (OST) complex. OST exists in two different complex forms which contain common core subunits RPN1, RPN2, OST48, OST4, DAD1 and TMEM258, either STT3A or STT3B as catalytic subunits, and form-specific accessory subunits. OST can form stable complexes with the Sec61 complex or with both the Sec61 and TRAP complexes. The association of TUSC3 or MAGT1 with the STT3B-containing complex seems to be mutually exclusvice. In terms of tissue distribution, ubiquitous. Expressed at very low levels in brain, lung and kidney.

It is found in the cell membrane. Its subcellular location is the endoplasmic reticulum. It localises to the endoplasmic reticulum membrane. It participates in protein modification; protein glycosylation. In terms of biological role, accessory component of the STT3B-containing form of the N-oligosaccharyl transferase (OST) complex which catalyzes the transfer of a high mannose oligosaccharide from a lipid-linked oligosaccharide donor to an asparagine residue within an Asn-X-Ser/Thr consensus motif in nascent polypeptide chains. Involved in N-glycosylation of STT3B-dependent substrates. Specifically required for the glycosylation of a subset of acceptor sites that are near cysteine residues; in this function seems to act redundantly with TUSC3. In its oxidized form proposed to form transient mixed disulfides with a glycoprotein substrate to facilitate access of STT3B to the unmodified acceptor site. Also has oxidoreductase-independent functions in the STT3B-containing OST complex possibly involving substrate recognition. Could indirectly play a role in Mg(2+) transport in epithelial cells. This chain is Dolichyl-diphosphooligosaccharide--protein glycosyltransferase subunit MAGT1, found in Homo sapiens (Human).